The chain runs to 2156 residues: Oxygen-regulated protein 1 (2156 aa).

The span at 1-19 (MSDTPSTGFSIIHPTSSEG) shows a compositional bias: polar residues. The interval 1–25 (MSDTPSTGFSIIHPTSSEGQVPPPR) is disordered. 2 consecutive Doublecortin domains span residues 36-118 (KRIS…VDLD) and 154-233 (RSLV…GNYD). Disordered regions lie at residues 353 to 375 (VSKT…RTES), 666 to 686 (SSVA…SRYQ), 1438 to 1458 (DMEE…MTSS), and 1590 to 1621 (DWSD…TQEK).

Interacts (via the doublecortin domains) with microtubules. Interacts with RP1L1. Interacts with MAK. Expressed in retina. Not expressed in heart, brain, placenta, lung, liver, skeletal muscle, kidney, spleen and pancreas.

It is found in the cytoplasm. It localises to the cytoskeleton. Its subcellular location is the cilium axoneme. The protein resides in the cell projection. The protein localises to the cilium. It is found in the photoreceptor outer segment. Its function is as follows. Microtubule-associated protein regulating the stability and length of the microtubule-based axoneme of photoreceptors. Required for the differentiation of photoreceptor cells, it plays a role in the organization of the outer segment of rod and cone photoreceptors ensuring the correct orientation and higher-order stacking of outer segment disks along the photoreceptor axoneme. In Homo sapiens (Human), this protein is Oxygen-regulated protein 1 (RP1).